The sequence spans 82 residues: Small ribosomal subunit protein uS17 (82 aa).

It belongs to the universal ribosomal protein uS17 family. Part of the 30S ribosomal subunit.

Functionally, one of the primary rRNA binding proteins, it binds specifically to the 5'-end of 16S ribosomal RNA. The sequence is that of Small ribosomal subunit protein uS17 from Afipia carboxidovorans (strain ATCC 49405 / DSM 1227 / KCTC 32145 / OM5) (Oligotropha carboxidovorans).